The following is a 371-amino-acid chain: Photosynthetic reaction center cytochrome c subunit (371 aa).

Residues M114, C127, C130, H131, M153, H167, C178, C181, H182, M267, C278, C281, H282, C339, C342, and H343 each contribute to the heme site.

In terms of assembly, component of the photosynthetic reaction center composed of protein subunits L (PufL), M (PufM), H (PuhA) and cytochrome C (PufC). The reaction center interacts with light-harvesting antenna complex LH1. Binds 4 heme groups per subunit.

Its subcellular location is the cellular chromatophore membrane. Its function is as follows. The reaction center of purple bacteria contains a tightly bound cytochrome molecule which re-reduces the photo oxidized primary electron donor. The sequence is that of Photosynthetic reaction center cytochrome c subunit (pufC) from Roseobacter denitrificans (strain ATCC 33942 / OCh 114) (Erythrobacter sp. (strain OCh 114)).